The following is a 67-amino-acid chain: ATP synthase F(0) complex subunit 8 (67 aa).

Residues 8-24 form a helical membrane-spanning segment; sequence TWFTTILSTSFSIIHRL. Lys54 bears the N6-acetyllysine; alternate mark. An N6-succinyllysine; alternate modification is found at Lys54. Position 57 is an N6-acetyllysine (Lys57).

It belongs to the ATPase protein 8 family. In terms of assembly, component of the ATP synthase complex composed at least of ATP5F1A/subunit alpha, ATP5F1B/subunit beta, ATP5MC1/subunit c (homooctomer), MT-ATP6/subunit a, MT-ATP8/subunit 8, ATP5ME/subunit e, ATP5MF/subunit f, ATP5MG/subunit g, ATP5MK/subunit k, ATP5MJ/subunit j, ATP5F1C/subunit gamma, ATP5F1D/subunit delta, ATP5F1E/subunit epsilon, ATP5PF/subunit F6, ATP5PB/subunit b, ATP5PD/subunit d, ATP5PO/subunit OSCP. ATP synthase complex consists of a soluble F(1) head domain (subunits alpha(3) and beta(3)) - the catalytic core - and a membrane F(0) domain - the membrane proton channel (subunits c, a, 8, e, f, g, k and j). These two domains are linked by a central stalk (subunits gamma, delta, and epsilon) rotating inside the F1 region and a stationary peripheral stalk (subunits F6, b, d, and OSCP). Interacts with PRICKLE3.

It localises to the mitochondrion membrane. In terms of biological role, subunit 8, of the mitochondrial membrane ATP synthase complex (F(1)F(0) ATP synthase or Complex V) that produces ATP from ADP in the presence of a proton gradient across the membrane which is generated by electron transport complexes of the respiratory chain. ATP synthase complex consist of a soluble F(1) head domain - the catalytic core - and a membrane F(1) domain - the membrane proton channel. These two domains are linked by a central stalk rotating inside the F(1) region and a stationary peripheral stalk. During catalysis, ATP synthesis in the catalytic domain of F(1) is coupled via a rotary mechanism of the central stalk subunits to proton translocation. In vivo, can only synthesize ATP although its ATP hydrolase activity can be activated artificially in vitro. Part of the complex F(0) domain. This is ATP synthase F(0) complex subunit 8 from Glis glis (Fat dormouse).